A 331-amino-acid polypeptide reads, in one-letter code: GTP 3',8-cyclase (331 aa).

The 229-residue stretch at Pro6–Pro234 folds into the Radical SAM core domain. Arg15 is a GTP binding site. [4Fe-4S] cluster is bound by residues Cys22 and Cys26. Tyr28 contacts S-adenosyl-L-methionine. Position 29 (Cys29) interacts with [4Fe-4S] cluster. Arg66 is a GTP binding site. S-adenosyl-L-methionine is bound at residue Gly70. Ser97 contributes to the GTP binding site. Ser121 contributes to the S-adenosyl-L-methionine binding site. Lys158 contacts GTP. Position 192 (Met192) interacts with S-adenosyl-L-methionine. Residues Cys258 and Cys261 each contribute to the [4Fe-4S] cluster site. A GTP-binding site is contributed by Arg263–Arg265. Cys275 contacts [4Fe-4S] cluster.

This sequence belongs to the radical SAM superfamily. MoaA family. As to quaternary structure, monomer and homodimer. It depends on [4Fe-4S] cluster as a cofactor.

The enzyme catalyses GTP + AH2 + S-adenosyl-L-methionine = (8S)-3',8-cyclo-7,8-dihydroguanosine 5'-triphosphate + 5'-deoxyadenosine + L-methionine + A + H(+). It participates in cofactor biosynthesis; molybdopterin biosynthesis. Its function is as follows. Catalyzes the cyclization of GTP to (8S)-3',8-cyclo-7,8-dihydroguanosine 5'-triphosphate. This is GTP 3',8-cyclase from Hydrogenovibrio crunogenus (strain DSM 25203 / XCL-2) (Thiomicrospira crunogena).